A 343-amino-acid polypeptide reads, in one-letter code: Isopentenyl-diphosphate delta-isomerase (343 aa).

A substrate-binding site is contributed by 6-7 (RK). FMN is bound by residues S63, 64-66 (SMT), S94, and N122. 94–96 (SMR) provides a ligand contact to substrate. Q157 contributes to the substrate binding site. E158 contributes to the Mg(2+) binding site. Residues K189, T219, 269-271 (GLK), and 290-291 (AG) each bind FMN.

This sequence belongs to the IPP isomerase type 2 family. In terms of assembly, homooctamer. Dimer of tetramers. The cofactor is FMN. NADPH serves as cofactor. It depends on Mg(2+) as a cofactor.

The protein localises to the cytoplasm. The catalysed reaction is isopentenyl diphosphate = dimethylallyl diphosphate. Functionally, involved in the biosynthesis of isoprenoids. Catalyzes the 1,3-allylic rearrangement of the homoallylic substrate isopentenyl (IPP) to its allylic isomer, dimethylallyl diphosphate (DMAPP). The chain is Isopentenyl-diphosphate delta-isomerase from Rickettsia bellii (strain OSU 85-389).